The sequence spans 702 residues: 1,4-alpha-glucan-branching enzyme (702 aa).

Ala2 carries the post-translational modification N-acetylalanine. Substrate is bound by residues 62-63 (NE) and 91-93 (WAP). Position 107 (Trp107) interacts with (1,4-alpha-D-glucosyl)n. A substrate-binding site is contributed by 118–121 (EYGK). Lys143 contributes to the (1,4-alpha-D-glucosyl)n binding site. Tyr173 carries the post-translational modification Phosphotyrosine. Residue 333–336 (EVLR) coordinates substrate. The active-site Nucleophile is the Asp357. The active-site Proton donor is the Glu412.

The protein belongs to the glycosyl hydrolase 13 family. GlgB subfamily. As to quaternary structure, monomer.

The enzyme catalyses Transfers a segment of a (1-&gt;4)-alpha-D-glucan chain to a primary hydroxy group in a similar glucan chain.. The protein operates within glycan biosynthesis; glycogen biosynthesis. Its function is as follows. Glycogen-branching enzyme participates in the glycogen biosynthetic process along with glycogenin and glycogen synthase. Generates alpha-1,6-glucosidic branches from alpha-1,4-linked glucose chains, to increase solubility of the glycogen polymer. In Mus musculus (Mouse), this protein is 1,4-alpha-glucan-branching enzyme (Gbe1).